Reading from the N-terminus, the 430-residue chain is Putative chloroquine resistance transporter (430 aa).

Positions 1 to 22 (MLKEGSSLDLSASSSSGTLRSD) are disordered. Residues 1-53 (MLKEGSSLDLSASSSSGTLRSDNSFGNSPLDRITSLLILIYKSIRACFKWIYS) are Cytoplasmic-facing. A compositionally biased stretch (low complexity) spans 7-21 (SLDLSASSSSGTLRS). The helical transmembrane segment at 54 to 74 (KSFGIICILFVILDVLTTVFF) threads the bilayer. At 75–88 (KRFIDHTKNYVMFT) the chain is on the vacuolar side. A helical membrane pass occupies residues 89 to 109 (IQVIIFTFWIIVCCIAILCFL). At 110–122 (FNREYMKRHFNVR) the chain is on the cytoplasmic side. A helical transmembrane segment spans residues 123–143 (PLVFLGFLDMLSTGLSANGSA). At 144–147 (HTSG) the chain is on the vacuolar side. A helical membrane pass occupies residues 148–168 (LMLVLLGQISVPLTMVSCKLI). Topologically, residues 169–173 (LSKKY) are cytoplasmic. Residues 174–194 (HHYQYISSAIILTFAVLKPIL) traverse the membrane as a helical segment. An N-linked (GlcNAc...) asparagine glycan is attached at N195. At 195–206 (NRTDTTDNRFYN) the chain is on the vacuolar side. A helical transmembrane segment spans residues 207 to 223 (NMLYLLASVPDSIASAL). Residues 224–239 (REKQYTSKFFHVVKYQ) are Cytoplasmic-facing. Residues 240–260 (FFGFLFHFFYNILYTLLFTLP) traverse the membrane as a helical segment. The Vacuolar portion of the chain corresponds to 261–306 (FNSVKGYFDSLYKLCVNGYKCIFFGVNTITENCGPTLIPTCDNCLE). Cystine bridges form between C281–C304 and C293–C301. Residues 307–329 (AFKIYCLYILFSSAIRVAYVFIM) traverse the membrane as a helical segment. The Cytoplasmic portion of the chain corresponds to 330–335 (LDGSVT). Residues 336-358 (FTLLLGTVKVPLTSIAFSLRFIA) traverse the membrane as a helical segment. Residues 359-364 (GDSTTS) are Vacuolar-facing. Residues 365–385 (FNLLDVVCFLGIVAGLLLYAL) form a helical membrane-spanning segment. The Cytoplasmic portion of the chain corresponds to 386–430 (GSKKIQEETDLLESPLIDDAESEHELLSTGTEKLMRSEICHDLFT).

Belongs to the CRT-like transporter family.

Its subcellular location is the vacuole membrane. Functionally, nutrient transporter. Involved in maintaining the osmotic homeostasis of the digestive vacuole. This Theileria annulata protein is Putative chloroquine resistance transporter.